The chain runs to 850 residues: Envelope glycoprotein gp160 (850 aa).

Positions Met-1–Glu-28 are cleaved as a signal peptide. Topologically, residues Asn-29 to Ile-678 are extracellular. Cys-50 and Cys-70 form a disulfide bridge. 19 N-linked (GlcNAc...) asparagine; by host glycosylation sites follow: Asn-84, Asn-126, Asn-133, Asn-134, Asn-139, Asn-152, Asn-156, Asn-184, Asn-193, Asn-226, Asn-230, Asn-237, Asn-258, Asn-272, Asn-285, Asn-297, Asn-327, Asn-334, and Asn-349. 5 disulfide bridges follow: Cys-115-Cys-201, Cys-122-Cys-192, Cys-127-Cys-153, Cys-214-Cys-243, and Cys-224-Cys-235. Residues Cys-127–Asn-152 form a V1 region. The tract at residues Cys-153–Cys-192 is V2. Positions Cys-292–Tyr-325 are V3. A disulfide bond links Cys-292 and Cys-326. The CD4-binding loop stretch occupies residues Pro-357 to His-367. Intrachain disulfides connect Cys-371/Cys-436 and Cys-378/Cys-409. The segment at Cys-378–Cys-409 is V4. N-linked (GlcNAc...) asparagine; by host glycosylation is found at Asn-379, Asn-385, Asn-397, Asn-402, Asn-433, Asn-439, Asn-453, and Asn-457. The tract at residues Arg-447 to Gly-467 is disordered. A compositionally biased stretch (polar residues) spans Asn-453 to Phe-462. V5 stretches follow at residues Asn-453–Thr-465 and Gly-454–Thr-465. The segment at Ala-506–Ala-526 is fusion peptide. The immunosuppression stretch occupies residues Lys-568 to Leu-586. The cysteines at positions 592 and 598 are disulfide-linked. Asn-605, Asn-610, Asn-619, Asn-631, and Asn-668 each carry an N-linked (GlcNAc...) asparagine; by host glycan. Residues Arg-627–Thr-661 adopt a coiled-coil conformation. Positions Ala-656 to Lys-677 are MPER; binding to GalCer. Residues Phe-679 to Val-699 traverse the membrane as a helical segment. Over Asn-700–Leu-850 the chain is Cytoplasmic. Positions Tyr-706 to Leu-709 match the YXXL motif; contains endocytosis signal motif. The S-palmitoyl cysteine; by host moiety is linked to residue Cys-758. Residues Leu-849–Leu-850 carry the Di-leucine internalization motif motif.

Belongs to the HIV-1 env protein family. As to quaternary structure, the mature envelope protein (Env) consists of a homotrimer of non-covalently associated gp120-gp41 heterodimers. The resulting complex protrudes from the virus surface as a spike. There seems to be as few as 10 spikes on the average virion. Interacts with host CD4, CCR5 and CXCR4. Gp120 also interacts with the C-type lectins CD209/DC-SIGN and CLEC4M/DC-SIGNR (collectively referred to as DC-SIGN(R)). Gp120 and gp41 interact with GalCer. Gp120 interacts with host ITGA4/ITGB7 complex; on CD4+ T-cells, this interaction results in rapid activation of integrin ITGAL/LFA-1, which facilitates efficient cell-to-cell spreading of HIV-1. Gp120 interacts with cell-associated heparan sulfate; this interaction increases virus infectivity on permissive cells and may be involved in infection of CD4- cells. The mature envelope protein (Env) consists of a homotrimer of non-covalently associated gp120-gp41 heterodimers. The resulting complex protrudes from the virus surface as a spike. There seems to be as few as 10 spikes on the average virion. In terms of processing, highly glycosylated by host. The high number of glycan on the protein is reffered to as 'glycan shield' because it contributes to hide protein sequence from adaptive immune system. Palmitoylation of the transmembrane protein and of Env polyprotein (prior to its proteolytic cleavage) is essential for their association with host cell membrane lipid rafts. Palmitoylation is therefore required for envelope trafficking to classical lipid rafts, but not for viral replication. Post-translationally, specific enzymatic cleavages in vivo yield mature proteins. Envelope glycoproteins are synthesized as an inactive precursor that is heavily N-glycosylated and processed likely by host cell furin in the Golgi to yield the mature SU and TM proteins. The cleavage site between SU and TM requires the minimal sequence [KR]-X-[KR]-R. About 2 of the 9 disulfide bonds of gp41 are reduced by P4HB/PDI, following binding to CD4 receptor.

It localises to the virion membrane. Its subcellular location is the host cell membrane. It is found in the host endosome membrane. In terms of biological role, oligomerizes in the host endoplasmic reticulum into predominantly trimers. In a second time, gp160 transits in the host Golgi, where glycosylation is completed. The precursor is then proteolytically cleaved in the trans-Golgi and thereby activated by cellular furin or furin-like proteases to produce gp120 and gp41. Attaches the virus to the host lymphoid cell by binding to the primary receptor CD4. This interaction induces a structural rearrangement creating a high affinity binding site for a chemokine coreceptor like CXCR4 and/or CCR5. Acts as a ligand for CD209/DC-SIGN and CLEC4M/DC-SIGNR, which are respectively found on dendritic cells (DCs), and on endothelial cells of liver sinusoids and lymph node sinuses. These interactions allow capture of viral particles at mucosal surfaces by these cells and subsequent transmission to permissive cells. HIV subverts the migration properties of dendritic cells to gain access to CD4+ T-cells in lymph nodes. Virus transmission to permissive T-cells occurs either in trans (without DCs infection, through viral capture and transmission), or in cis (following DCs productive infection, through the usual CD4-gp120 interaction), thereby inducing a robust infection. In trans infection, bound virions remain infectious over days and it is proposed that they are not degraded, but protected in non-lysosomal acidic organelles within the DCs close to the cell membrane thus contributing to the viral infectious potential during DCs' migration from the periphery to the lymphoid tissues. On arrival at lymphoid tissues, intact virions recycle back to DCs' cell surface allowing virus transmission to CD4+ T-cells. Its function is as follows. Acts as a class I viral fusion protein. Under the current model, the protein has at least 3 conformational states: pre-fusion native state, pre-hairpin intermediate state, and post-fusion hairpin state. During fusion of viral and target intracellular membranes, the coiled coil regions (heptad repeats) assume a trimer-of-hairpins structure, positioning the fusion peptide in close proximity to the C-terminal region of the ectodomain. The formation of this structure appears to drive apposition and subsequent fusion of viral and target cell membranes. Complete fusion occurs in host cell endosomes and is dynamin-dependent, however some lipid transfer might occur at the plasma membrane. The virus undergoes clathrin-dependent internalization long before endosomal fusion, thus minimizing the surface exposure of conserved viral epitopes during fusion and reducing the efficacy of inhibitors targeting these epitopes. Membranes fusion leads to delivery of the nucleocapsid into the cytoplasm. This is Envelope glycoprotein gp160 from Human immunodeficiency virus type 1 group M subtype J (isolate SE9173) (HIV-1).